The chain runs to 394 residues: HORMA domain-containing protein 1 (394 aa).

The region spanning 24 to 226 (HQSLVLVKRL…TPFHIFKVKV (203 aa)) is the HORMA domain. The segment covering 253–282 (ILRDKDVEDEQEHYTSDDLDIETKMEEQEK) has biased composition (basic and acidic residues). Residues 253–394 (ILRDKDVEDE…RKFSEPKEHI (142 aa)) are disordered. Positions 288 to 300 (ELEEPSLVCEEDE) are enriched in acidic residues. 2 stretches are compositionally biased toward polar residues: residues 310–324 (LSISHSQVEQLVNKT) and 343–352 (KMANGNQPVK). Residues 362–374 (QHESGRIVLHHFD) show a composition bias toward basic and acidic residues. A Phosphoserine modification is found at serine 376. The short motif at 383 to 386 (KRRK) is the Nuclear localization signal element.

As to quaternary structure, interacts with HORMAD2. Interacts with IHO1. Post-translationally, phosphorylated at Ser-377 in a SPO11-dependent manner. As to expression, testis-specific. Over-expressed in carcinomas.

Its subcellular location is the nucleus. It is found in the chromosome. Functionally, plays a key role in meiotic progression. Regulates 3 different functions during meiosis: ensures that sufficient numbers of processed DNA double-strand breaks (DSBs) are available for successful homology search by increasing the steady-state numbers of single-stranded DSB ends. Promotes synaptonemal-complex formation independently of its role in homology search. Plays a key role in the male mid-pachytene checkpoint and the female meiotic prophase checkpoint: required for efficient build-up of ATR activity on unsynapsed chromosome regions, a process believed to form the basis of meiotic silencing of unsynapsed chromatin (MSUC) and meiotic prophase quality control in both sexes. The protein is HORMA domain-containing protein 1 of Homo sapiens (Human).